A 326-amino-acid chain; its full sequence is MENVFDYEDIQLIPAKCIVKSRSECDTSVQFGGRTFKLPVVPANMQTIIDEKLAVSLAENGYFYVMHRFEPETRIDFIKDMKARGLFSSISVGVKDEEYAFIEELTRENLTPEYITIDIAHGHSNAVINMIQHIKKHLPDSFVIAGNVGTPEAVRELENAGADATKVGIGPGKVCITKIKTGFGTGGWQLAALRWCAKAASKPIIADGGIRTHGDIAKSVRFGATMVMIGSLFAGHEESPGATIEKDGKLYKEYFGSASEYQKGEKKNVEGKKMYVEHKGAIMDTLTEMEQDLQSSISYAGGNKLDAIRNVDYVIVKNSIFNGDQY.

The active-site Thioimidate intermediate is cysteine 175. 204–227 (IIADGGIRTHGDIAKSVRFGATMV) provides a ligand contact to NADP(+).

The protein belongs to the IMPDH/GMPR family. GuaC type 2 subfamily.

The catalysed reaction is IMP + NH4(+) + NADP(+) = GMP + NADPH + 2 H(+). Its function is as follows. Catalyzes the irreversible NADPH-dependent deamination of GMP to IMP. It functions in the conversion of nucleobase, nucleoside and nucleotide derivatives of G to A nucleotides, and in maintaining the intracellular balance of A and G nucleotides. This chain is GMP reductase, found in Bacillus licheniformis (strain ATCC 14580 / DSM 13 / JCM 2505 / CCUG 7422 / NBRC 12200 / NCIMB 9375 / NCTC 10341 / NRRL NRS-1264 / Gibson 46).